A 64-amino-acid polypeptide reads, in one-letter code: Large ribosomal subunit protein bL32 (64 aa).

The span at 1–15 shows a compositional bias: basic residues; sequence MAVPKRKVSKSRRDS. The disordered stretch occupies residues 1 to 21; that stretch reads MAVPKRKVSKSRRDSRRAQTF.

The protein belongs to the bacterial ribosomal protein bL32 family.

This is Large ribosomal subunit protein bL32 from Symbiobacterium thermophilum (strain DSM 24528 / JCM 14929 / IAM 14863 / T).